We begin with the raw amino-acid sequence, 113 residues long: Nucleoid-associated protein Synpcc7942_0464 (113 aa).

It belongs to the YbaB/EbfC family. As to quaternary structure, homodimer.

The protein localises to the cytoplasm. Its subcellular location is the nucleoid. In terms of biological role, binds to DNA and alters its conformation. May be involved in regulation of gene expression, nucleoid organization and DNA protection. This Synechococcus elongatus (strain ATCC 33912 / PCC 7942 / FACHB-805) (Anacystis nidulans R2) protein is Nucleoid-associated protein Synpcc7942_0464.